A 367-amino-acid chain; its full sequence is Glutamate 5-kinase (367 aa).

Residue Lys-10 participates in ATP binding. 3 residues coordinate substrate: Ser-50, Asp-137, and Asn-149. Residues 169-170 (TD) and 211-217 (TGGMATK) each bind ATP. Residues 275–353 (AGEITVDDGA…QQISEILGYE (79 aa)) form the PUA domain.

Belongs to the glutamate 5-kinase family.

The protein resides in the cytoplasm. It catalyses the reaction L-glutamate + ATP = L-glutamyl 5-phosphate + ADP. It participates in amino-acid biosynthesis; L-proline biosynthesis; L-glutamate 5-semialdehyde from L-glutamate: step 1/2. Its function is as follows. Catalyzes the transfer of a phosphate group to glutamate to form L-glutamate 5-phosphate. This is Glutamate 5-kinase from Yersinia pseudotuberculosis serotype IB (strain PB1/+).